The primary structure comprises 308 residues: MAEITASMVKQLRETTGAGMMDCKSALTETGGDMEAAIDWLRTKGLAKAAKKAGRVAAEGLIGVVANGTAGAIVEVNSETDFVARNEQFQKMVSDIASAALSVEGDFDKLVASTYPGSSKSVQDYVTEMVGTIGENMSVRRAGCISVSDGAVAAYVHSQVVPGLGKIGVLVGLESKGDKTKLLELGRQIAMHIAATNPLATRKEEMDPALVERERNVLIAEAKESGRPDNIIEKMVEGRIRKFYEEVVLLSQAFVINPDDTVEKAVKAAEADVGAPITVVGFLRFALGEGIEKEESDFAAEVAAAARG.

Residues 80–83 (TDFV) form an involved in Mg(2+) ion dislocation from EF-Tu region.

The protein belongs to the EF-Ts family.

It localises to the cytoplasm. Associates with the EF-Tu.GDP complex and induces the exchange of GDP to GTP. It remains bound to the aminoacyl-tRNA.EF-Tu.GTP complex up to the GTP hydrolysis stage on the ribosome. The polypeptide is Elongation factor Ts (Parvibaculum lavamentivorans (strain DS-1 / DSM 13023 / NCIMB 13966)).